Here is a 374-residue protein sequence, read N- to C-terminus: MATDFPAEISALRGTLEQITAVTDPDALRARIAELSEAAAAPDLWDDPDAAQKVTSRLSHTQSELERLDTLRSRIDDLETLVQLAAEEDDADTLAEAEAELTKIRTSMGELEVRTLLAGEYDSREAVVTIRSGAGGVDAADFAEMLLRMYLRWAERKGYPTQVLDTSYAEEAGLKSATFEVKVPYAFGTLSVEAGTHRLVRISPFDNQGRRQTSFAAVEVIPLIEQTDHIDIPETDIRIDVFRSSGPGGQSVNTTDSAVRITHLPTGIVVSMQNEKSQIQNRAAAMRVLQSRLLLAMQEEENAKKKELAGDVKASWGDQMRSYVLQPYQMVKDLRTEHEVGNPSAVFDGDIDDFIEAGIRWRRQQQTVRESATA.

At Q250 the chain carries N5-methylglutamine.

The protein belongs to the prokaryotic/mitochondrial release factor family. Post-translationally, methylated by PrmC. Methylation increases the termination efficiency of RF2.

The protein localises to the cytoplasm. Functionally, peptide chain release factor 2 directs the termination of translation in response to the peptide chain termination codons UGA and UAA. This chain is Peptide chain release factor 2, found in Beutenbergia cavernae (strain ATCC BAA-8 / DSM 12333 / CCUG 43141 / JCM 11478 / NBRC 16432 / NCIMB 13614 / HKI 0122).